We begin with the raw amino-acid sequence, 296 residues long: Glycine--tRNA ligase alpha subunit (296 aa).

This sequence belongs to the class-II aminoacyl-tRNA synthetase family. In terms of assembly, tetramer of two alpha and two beta subunits.

The protein resides in the cytoplasm. It carries out the reaction tRNA(Gly) + glycine + ATP = glycyl-tRNA(Gly) + AMP + diphosphate. This is Glycine--tRNA ligase alpha subunit from Desulfitobacterium hafniense (strain Y51).